A 206-amino-acid polypeptide reads, in one-letter code: Putative acetyltransferase OgpAT (206 aa).

An N-acetyltransferase domain is found at 5 to 205; the sequence is VVIRRATAAD…EVVVGRRLLD (201 aa). Residues 135-138, 144-148, 175-177, and His-184 contribute to the acetyl-CoA site; these read HIDL, GRGVG, and NPR.

Belongs to the acetyltransferase family. In terms of assembly, monomer.

Functionally, binds acetyl-CoA, but not butyryl-CoA or decanoyl-CoA. May have acetyltransferase activity. The polypeptide is Putative acetyltransferase OgpAT (Oceanicola granulosus (strain ATCC BAA-861 / DSM 15982 / KCTC 12143 / HTCC2516)).